Reading from the N-terminus, the 187-residue chain is LSM complex subunit LSM4 (187 aa).

One can recognise a Sm domain in the interval 2-85 (LPLYLLTNAK…IKFIKLQDNI (84 aa)). The segment at 93–187 (INSNNNSNSN…NSSSPQKVEF (95 aa)) is disordered. A compositionally biased stretch (low complexity) spans 112 to 167 (NRDSNNNRGNYNRRNNNNGNSNRRPYSQNRQYNNSNSSNINNSINSINSNNQNMNN). Arg-119 is modified (omega-N-methylarginine). The segment covering 175–187 (HHFNSSSPQKVEF) has biased composition (polar residues). Ser-181 carries the post-translational modification Phosphoserine.

Belongs to the snRNP Sm proteins family. As to quaternary structure, component of the heptameric LSM1-LSM7 complex that forms a seven-membered ring structure with a donut shape. The LSm subunits are arranged in the order LSM1, LSM2, LSM3, LSM6, LSM5, LSM7 and LSM4. Except for LSM1, where a C-terminal helix crosses the ring structure to form additional interactions with LSM3 and LSM6, each subunit interacts only with its two neighboring subunits. The LSM1-LSM7 complex interacts with PAT1; within the complex PAT1 has direct interactions with LSM2 and LSM3. The LSM1-LSM7 complex interacts with XRN1. Component of the heptameric LSM2-LSM8 complex that forms a seven-membered ring structure with a donut shape; an RNA strand can pass through the hole in the center of the ring structure. The LSm subunits are arranged in the order LSM8, LSM2, LSM3, LSM6, LSM5, LSM7 and LSM4. Component of the spliceosome U4/U6-U5 tri-snRNP complex composed of the U4, U6 and U5 snRNAs and at least PRP3, PRP4, PRP6, PRP8, PRP18, PRP31, PRP38, SNU13, SNU23, SNU66, SNU114, SPP381, SMB1, SMD1, SMD2, SMD3, SMX2, SMX3, LSM2, LSM3, LSM4, LSM5, LSM6, LSM7, LSM8, BRR2 and DIB1. May be found in a complex comprising LSM2-LSM7 without LSM1 or LSM8; the complex associates with pre-P RNA and snoRNA SNR5.

The protein localises to the nucleus. It localises to the cytoplasm. In terms of biological role, component of LSm protein complexes, which are involved in RNA processing and may function in a chaperone-like manner. Component of the cytoplasmic LSM1-LSM7 complex which is involved in mRNA degradation by activating the decapping step. Together with PAT1, the LSM1-LSM7 complex binds to osmotic stress-activated mRNAs to attenuate the osmotic stress response, probably by limiting ribosome access to the mRNA and consequently translation. Component of the nuclear LSM2-LSM8 complex, which is involved in spliceosome assembly. The LSM2-LSM8 complex plays a role in the biogenesis of the spliceosomal U4/U6-U5 tri-snRNP complex by accelerating PRP24-mediated annealing of U4/U6 di-snRNA. The LSM2-LSM8 complex binds U6 snRNA terminating with a non-cyclic 3' phosphate group. LSM2-LSM8 is probably also involved in degradation of nuclear pre-mRNA by targeting them for decapping. LSM2-LSM8 could be involved in processing of pre-tRNAs, pre-rRNAs and U3 snoRNA, although involvement may be indirect. In a complex that probably contains LSM2-LSM7, but not LSM1 or LSM8, associates with the precursor of the RNA component of RNase P (pre-P RNA) and may be involved in maturing pre-P RNA; the complex also associates with snoRNA SNR5. The chain is LSM complex subunit LSM4 from Saccharomyces cerevisiae (strain ATCC 204508 / S288c) (Baker's yeast).